A 1164-amino-acid chain; its full sequence is DNA-directed RNA polymerase (1164 aa).

This sequence belongs to the RNA polymerase beta chain family. As to quaternary structure, the DNA-dependent RNA polymerase used for intermediate and late genes expression consists of eight subunits 147 kDa, 133 kDa, 35 kDa, 30 kDa, 22 kDa, 19 kDa, 18 kDa and 7 kDa totalling more than 500 kDa in mass. The same holoenzyme, with the addition of the transcription-specificity factor RAP94, is used for early gene expression.

It localises to the virion. It catalyses the reaction RNA(n) + a ribonucleoside 5'-triphosphate = RNA(n+1) + diphosphate. Part of the DNA-dependent RNA polymerase which catalyzes the transcription of viral DNA into RNA using the four ribonucleoside triphosphates as substrates. Responsible for the transcription of early, intermediate and late genes. DNA-dependent RNA polymerase associates with the early transcription factor (ETF), itself composed of OPG118 and OPG133, thereby allowing the early genes transcription. Late transcription, and probably also intermediate transcription, require newly synthesized RNA polymerase. This Monkeypox virus protein is DNA-directed RNA polymerase (OPG151).